Reading from the N-terminus, the 683-residue chain is Acetyl-coenzyme A synthetase 2 (683 aa).

Residues 206–209 (RGGK) and Thr325 each bind CoA. ATP-binding positions include 401-403 (GEP) and 425-430 (DTMWQT). AMP is bound at residue 425-430 (DTMWQT). A Glycyl lysine isopeptide (Lys-Gly) (interchain with G-Cter in ubiquitin) cross-link involves residue Lys506. ATP is bound by residues Asp516 and Arg531. The AMP site is built by Asp516 and Arg531. Ser539 serves as a coordination point for CoA. Residue Arg542 coordinates ATP. Arg612 lines the CoA pocket. Residue Ser679 is modified to Phosphoserine.

It belongs to the ATP-dependent AMP-binding enzyme family.

The protein localises to the cytoplasm. The protein resides in the nucleus. The catalysed reaction is acetate + ATP + CoA = acetyl-CoA + AMP + diphosphate. Its pathway is carbohydrate metabolism; pyruvate metabolism. Catalyzes the production of acetyl-CoA. Provides the acetyl-CoA source for histone acetylation in the nucleus. 'Anaerobic' isozyme of acetyl-coenzyme A synthetase, which is required for growth on fermentable carbon sources such as glucose. May be involved in the PDH (pyruvate dehydrogenase complex) bypass. This Saccharomyces cerevisiae (strain ATCC 204508 / S288c) (Baker's yeast) protein is Acetyl-coenzyme A synthetase 2.